We begin with the raw amino-acid sequence, 598 residues long: Elongation factor 4 (598 aa).

A tr-type G domain is found at 4 to 186 (SRLRNFSIIA…EIVKKIPPPK (183 aa)). GTP is bound by residues 16–21 (DHGKST) and 133–136 (NKID).

It belongs to the TRAFAC class translation factor GTPase superfamily. Classic translation factor GTPase family. LepA subfamily.

The protein resides in the cell inner membrane. It carries out the reaction GTP + H2O = GDP + phosphate + H(+). In terms of biological role, required for accurate and efficient protein synthesis under certain stress conditions. May act as a fidelity factor of the translation reaction, by catalyzing a one-codon backward translocation of tRNAs on improperly translocated ribosomes. Back-translocation proceeds from a post-translocation (POST) complex to a pre-translocation (PRE) complex, thus giving elongation factor G a second chance to translocate the tRNAs correctly. Binds to ribosomes in a GTP-dependent manner. The sequence is that of Elongation factor 4 from Pelobacter propionicus (strain DSM 2379 / NBRC 103807 / OttBd1).